A 232-amino-acid chain; its full sequence is 2,3-bisphosphoglycerate-dependent phosphoglycerate mutase (232 aa).

Substrate is bound by residues 10-17 (RHGESQWN), 23-24 (TG), arginine 62, 89-92 (ERHY), lysine 100, 116-117 (RR), and 185-186 (GN). The active-site Tele-phosphohistidine intermediate is the histidine 11. Glutamate 89 acts as the Proton donor/acceptor in catalysis.

This sequence belongs to the phosphoglycerate mutase family. BPG-dependent PGAM subfamily. Homodimer.

The enzyme catalyses (2R)-2-phosphoglycerate = (2R)-3-phosphoglycerate. Its pathway is carbohydrate degradation; glycolysis; pyruvate from D-glyceraldehyde 3-phosphate: step 3/5. Functionally, catalyzes the interconversion of 2-phosphoglycerate and 3-phosphoglycerate. This is 2,3-bisphosphoglycerate-dependent phosphoglycerate mutase from Blochmanniella floridana.